A 1561-amino-acid chain; its full sequence is ABC-type transporter phomO' (1561 aa).

7 consecutive transmembrane segments (helical) span residues 34 to 54 (LYFEEVVFVLVPSCVFILLAA), 110 to 130 (CTAGLLVTLHVAGLILLCTTV), 139 to 159 (SVPASVVAALAFGVVPVLAHF), 172 to 192 (SSSLLVGLFLCVAVLLRAPLV), 202 to 222 (GSALVAVEIASLVLQLVLIAV), 314 to 334 (LGLYALAPVIPRLCLAGFTLA), and 358 to 378 (GLIGATFLIYTGIAVSTGWYW). The ABC transmembrane type-1 1 domain occupies 326–599 (LCLAGFTLAQ…LLQIIPSFGA (274 aa)). An N-linked (GlcNAc...) asparagine glycan is attached at N384. Transmembrane regions (helical) follow at residues 428 to 448 (LAYAHELWVAPIETAIGTWML), 452 to 472 (VGPPGLVVLGIIGVCLGTSTY), 535 to 555 (LIVGTLLSSYSTATLAPVLVF), and 577 to 597 (LIWISLLASPLIQLLQIIPSF). The ABC transporter 1 domain occupies 645 to 871 (IHNSSFSYTD…VEDENGDVDN (227 aa)). N647 carries an N-linked (GlcNAc...) asparagine glycan. 678–685 (GPAGCGKS) serves as a coordination point for ATP. N-linked (GlcNAc...) asparagine glycosylation is present at N721. Residues 853-899 (YQFPPSQADVEDENGDVDNGAENTRPRESSHTTEAQSGPPEPKSKPT) are disordered. 4 helical membrane-spanning segments follow: residues 913–933 (SIGFLNLVLFIGGGIIFAFCL), 969–989 (VLPLIAVAGWVAQLMMLIVPL), 1037–1054 (LFNTAAALLTGIAQVILI), and 1147–1167 (LVLNLVVAGLALVVMGAAVGL). The ABC transmembrane type-1 2 domain occupies 920–1209 (VLFIGGGIIF…LLTAWTSLET (290 aa)). N1189 carries N-linked (GlcNAc...) asparagine glycosylation. Basic and acidic residues predominate over residues 1229–1238 (DVLVRPDSLD). A disordered region spans residues 1229–1298 (DVLVRPDSLD…DVAADGEKHE (70 aa)). Acidic residues predominate over residues 1269-1280 (YDDDDESDENTD). One can recognise an ABC transporter 2 domain in the interval 1297-1545 (HEATTITTTS…SDIFAFFGRS (249 aa)). 1333–1340 (GRTGSGKS) provides a ligand contact to ATP. N-linked (GlcNAc...) asparagine glycosylation occurs at N1496.

The protein belongs to the ABC transporter superfamily. ABCC family. Conjugate transporter (TC 3.A.1.208) subfamily.

It localises to the membrane. Its function is as follows. ABC-type transporter; part of the gene cluster that mediates the biosynthesis of the phomopsins, a group of hexapeptide mycotoxins which infects lupins and causes lupinosis disease in livestock. The chain is ABC-type transporter phomO' from Diaporthe leptostromiformis (Lupinosis disease fungus).